A 341-amino-acid polypeptide reads, in one-letter code: Methionine import ATP-binding protein MetN 2 (341 aa).

The 240-residue stretch at 2–241 (IEASELTKVY…PKAPLTQEFI (240 aa)) folds into the ABC transporter domain. Residue 38-45 (GYSGAGKS) participates in ATP binding.

Belongs to the ABC transporter superfamily. Methionine importer (TC 3.A.1.24) family. The complex is composed of two ATP-binding proteins (MetN), two transmembrane proteins (MetI) and a solute-binding protein (MetQ).

It localises to the cell membrane. The enzyme catalyses L-methionine(out) + ATP + H2O = L-methionine(in) + ADP + phosphate + H(+). It carries out the reaction D-methionine(out) + ATP + H2O = D-methionine(in) + ADP + phosphate + H(+). Part of the ABC transporter complex MetNIQ involved in methionine import. Responsible for energy coupling to the transport system. This chain is Methionine import ATP-binding protein MetN 2, found in Shouchella clausii (strain KSM-K16) (Alkalihalobacillus clausii).